Reading from the N-terminus, the 968-residue chain is RNA polymerase-associated protein RapA (968 aa).

Residues 163–332 (EVGRRFAPRV…FARLRLLDPD (170 aa)) enclose the Helicase ATP-binding domain. Residue 176–183 (DEVGLGKT) participates in ATP binding. The DEAH box motif lies at 278–281 (DEAH). Positions 491–645 (RVDWLIDFLK…TCPSGHILFN (155 aa)) constitute a Helicase C-terminal domain.

Belongs to the SNF2/RAD54 helicase family. RapA subfamily. As to quaternary structure, interacts with the RNAP. Has a higher affinity for the core RNAP than for the holoenzyme. Its ATPase activity is stimulated by binding to RNAP.

In terms of biological role, transcription regulator that activates transcription by stimulating RNA polymerase (RNAP) recycling in case of stress conditions such as supercoiled DNA or high salt concentrations. Probably acts by releasing the RNAP, when it is trapped or immobilized on tightly supercoiled DNA. Does not activate transcription on linear DNA. Probably not involved in DNA repair. In Shewanella woodyi (strain ATCC 51908 / MS32), this protein is RNA polymerase-associated protein RapA.